The chain runs to 331 residues: N-arachidonyl glycine receptor (331 aa).

At 1-26 (MAIPSNRDQLALSNGSHPEEYKIAAL) the chain is on the extracellular side. The N-linked (GlcNAc...) asparagine glycan is linked to Asn-14. The chain crosses the membrane as a helical span at residues 27 to 47 (VFYSCIFLIGLLVNVTALWVF). Topologically, residues 48 to 56 (SCTTKKRTT) are cytoplasmic. A helical membrane pass occupies residues 57-77 (VTIYMMNVALLDLVFILSLPF). The Extracellular portion of the chain corresponds to 78–95 (RMFYYAKGEWPFGDYFCH). An intrachain disulfide couples Cys-94 to Cys-172. The chain crosses the membrane as a helical span at residues 96–116 (ILGALVVFYPSLALWLLALIS). The Cytoplasmic segment spans residues 117 to 138 (ADRYMAIVQPKYAKELKNTGKA). A helical membrane pass occupies residues 139–159 (VLACVGVWIMTLTTTVPLLLL). At 160–191 (DEDPDKASSPATCLKISDIIHLKAVNVLNFTR) the chain is on the extracellular side. Asn-188 carries N-linked (GlcNAc...) asparagine glycosylation. A helical membrane pass occupies residues 192-212 (LIFFFLIPLFIMIGCYVVIIH). Residues 213 to 236 (SLLRGQTSKLKPKVKEKSIRIIVT) lie on the Cytoplasmic side of the membrane. The helical transmembrane segment at 237–257 (LLLQVLACFVPFHICFALLML) threads the bilayer. Residues 258–268 (QGEENSYSPWG) lie on the Extracellular side of the membrane. A helical transmembrane segment spans residues 269 to 289 (AFTTFLMNLSTCLDVVLYYIV). Topologically, residues 290-331 (SKQFQARVISVMLYRNYLRSVRRKSVRSGSLRSLSNMNSEML) are cytoplasmic. Residue Ser-322 is modified to Phosphoserine.

The protein belongs to the G-protein coupled receptor 1 family. Expressed in testis, spleen and brain (at protein level).

It is found in the cell membrane. The protein localises to the cytoplasmic vesicle membrane. G protein-coupled receptor (GPCR) that plays a role in diverse physiological processes particularly within the immune and nervous systems. Becomes active when triggered by various endogenous ligands including endocannabinoid N-arachidonyl glycine (NAGly), delta-9-tetrahydrocannabinol or resolvin D2/RvD2 derived from the omega-3 fatty acid docosahexaenoic acid (DHA). Upon RvD2 binding, facilitates the resolution of inflammation, aiding in tissue repair and homeostasis. Mechanistically, RvD2 ligation initiates Galphas protein coupling, activation of cAMP-PKA signaling pathway and phosphorylation of STAT3, leading to RvD2-stimulated macrophage phagocytosis. Mediates NAGly-induced process of reorganization of actin filaments and induction of acrosomal exocytosis. Activation by N-arachidonoyl glycine (NAGly) can also induce apoptosis in macrophages. Plays a role in homeostasis of CD8+ subsets of intraepithelial lymphocytes (IELs) (CD8alphaalpha and CD8alphabeta IELs) in small intestine by supporting preferential migration of CD8alphaalpha T-cells to intraepithelial compartment over lamina propria compartment, and by mediating their reconstitution into small intestine after bone marrow transplant. Participates also in hypotensive responses, mediating reduction in intraocular and blood pressure. In Rattus norvegicus (Rat), this protein is N-arachidonyl glycine receptor.